The primary structure comprises 481 residues: Dynein axonemal assembly factor 8 (481 aa).

Disordered stretches follow at residues Asp-70–Gly-91, Leu-131–Pro-233, Thr-306–Ser-397, and Arg-415–Ile-454. Ser-83, Ser-145, and Ser-147 each carry phosphoserine. Polar residues predominate over residues Gly-144–Glu-155. The span at Gly-163–Asn-176 shows a compositional bias: basic and acidic residues. Positions Ser-177–Arg-188 are enriched in basic residues. The span at Lys-198–Gln-211 shows a compositional bias: polar residues. Over residues Ser-310 to Ala-322 the composition is skewed to basic and acidic residues. A compositionally biased stretch (polar residues) spans Arg-323–Glu-336. Ser-328 carries the post-translational modification Phosphoserine. 2 stretches are compositionally biased toward basic and acidic residues: residues Arg-337–Thr-349 and Arg-359–Ser-380.

It localises to the dynein axonemal particle. It is found in the cytoplasm. In terms of biological role, in cyliated cells, dynein axonemal particle-specific protein required for deployment of ODA to the axoneme. Interacts with outer dynein arm (ODA) subunits. This is Dynein axonemal assembly factor 8 (Dnaaf8) from Rattus norvegicus (Rat).